The chain runs to 449 residues: UDP-N-acetylmuramoylalanine--D-glutamate ligase (449 aa).

An ATP-binding site is contributed by 118–124; that stretch reads GTNGKTT.

This sequence belongs to the MurCDEF family.

Its subcellular location is the cytoplasm. The catalysed reaction is UDP-N-acetyl-alpha-D-muramoyl-L-alanine + D-glutamate + ATP = UDP-N-acetyl-alpha-D-muramoyl-L-alanyl-D-glutamate + ADP + phosphate + H(+). It functions in the pathway cell wall biogenesis; peptidoglycan biosynthesis. Its function is as follows. Cell wall formation. Catalyzes the addition of glutamate to the nucleotide precursor UDP-N-acetylmuramoyl-L-alanine (UMA). The chain is UDP-N-acetylmuramoylalanine--D-glutamate ligase from Staphylococcus carnosus (strain TM300).